The chain runs to 33 residues: MSDINATRLPIWGIGCDPCVGDDVTAVLTRGEA.

A propeptide spanning residues 1 to 10 is cleaved from the precursor; it reads MSDINATRLP. Positions 11–18 form a cross-link, cyclopeptide (Ile-Pro); that stretch reads IWGIGCDP. A cross-link (2'-cysteinyl-6'-hydroxytryptophan sulfoxide (Trp-Cys)) is located at residues 12-16; the sequence is WGIGC. Residues 19–33 constitute a propeptide that is removed on maturation; the sequence is CVGDDVTAVLTRGEA.

This sequence belongs to the MSDIN fungal toxin family. In terms of processing, processed by the macrocyclase-peptidase enzyme POPB to yield a toxic cyclic decapeptide. POPB first removes 10 residues from the N-terminus. Conformational trapping of the remaining peptide forces the enzyme to release this intermediate rather than proceed to macrocyclization. The enzyme rebinds the remaining peptide in a different conformation and catalyzes macrocyclization of the N-terminal 8 residues.

Toxin belonging to the bicyclic octapeptides amatoxins that acts by binding non-competitively to RNA polymerase II and greatly slowing the elongation of transcripts from target promoters. In Amanita pallidorosea, this protein is Beta-amanitin proprotein.